The sequence spans 363 residues: 3-dehydroquinate synthase (363 aa).

NAD(+) contacts are provided by residues 134-135, Lys147, and Lys156; that span reads TT. The Zn(2+) site is built by Glu189, His254, and His271.

Belongs to the sugar phosphate cyclases superfamily. Dehydroquinate synthase family. Co(2+) serves as cofactor. Zn(2+) is required as a cofactor. It depends on NAD(+) as a cofactor.

Its subcellular location is the cytoplasm. The enzyme catalyses 7-phospho-2-dehydro-3-deoxy-D-arabino-heptonate = 3-dehydroquinate + phosphate. It participates in metabolic intermediate biosynthesis; chorismate biosynthesis; chorismate from D-erythrose 4-phosphate and phosphoenolpyruvate: step 2/7. Its function is as follows. Catalyzes the conversion of 3-deoxy-D-arabino-heptulosonate 7-phosphate (DAHP) to dehydroquinate (DHQ). This chain is 3-dehydroquinate synthase, found in Prochlorococcus marinus (strain MIT 9215).